We begin with the raw amino-acid sequence, 299 residues long: Acetaldehyde dehydrogenase 2 (299 aa).

Residue C130 is the Acyl-thioester intermediate of the active site. Residues 161-169 (SVGPGTRKN) and N272 each bind NAD(+).

It belongs to the acetaldehyde dehydrogenase family.

It catalyses the reaction acetaldehyde + NAD(+) + CoA = acetyl-CoA + NADH + H(+). This is Acetaldehyde dehydrogenase 2 from Burkholderia lata (strain ATCC 17760 / DSM 23089 / LMG 22485 / NCIMB 9086 / R18194 / 383).